Reading from the N-terminus, the 391-residue chain is 3-ketoacyl-CoA thiolase (391 aa).

Cys95 acts as the Acyl-thioester intermediate in catalysis. Residues His347 and Cys377 each act as proton acceptor in the active site.

It belongs to the thiolase-like superfamily. Thiolase family. Heterotetramer of two alpha chains (FadB) and two beta chains (FadA).

The protein localises to the cytoplasm. It carries out the reaction an acyl-CoA + acetyl-CoA = a 3-oxoacyl-CoA + CoA. Its pathway is lipid metabolism; fatty acid beta-oxidation. Its function is as follows. Catalyzes the final step of fatty acid oxidation in which acetyl-CoA is released and the CoA ester of a fatty acid two carbons shorter is formed. This is 3-ketoacyl-CoA thiolase from Pseudomonas entomophila (strain L48).